Consider the following 682-residue polypeptide: Potassium-transporting ATPase ATP-binding subunit (682 aa).

4 helical membrane-spanning segments follow: residues 34–54, 62–82, 219–239, and 254–274; these read PVMFIVWIGSLLTTCISIAMA, ALFSAAISGWLWVTVLFANFA, IALTILLIALTIVFLLATATL, and VLVALLVCLIPTTIGGLLSAI. The active-site 4-aspartylphosphate intermediate is Asp307. ATP contacts are provided by residues Asp344, Glu348, 377–384, and Lys395; that span reads FTAQSRMS. Mg(2+) contacts are provided by Asp518 and Asp522. The next 3 helical transmembrane spans lie at 588-608, 616-636, and 662-682; these read FAIIPAAFAATYPQLNALNIM, AILSAVIFNALIIVFLIPLAL, and LLVPFIGIKVIDLLLTICGLV.

Belongs to the cation transport ATPase (P-type) (TC 3.A.3) family. Type IA subfamily. The system is composed of three essential subunits: KdpA, KdpB and KdpC.

It localises to the cell inner membrane. It carries out the reaction K(+)(out) + ATP + H2O = K(+)(in) + ADP + phosphate + H(+). Part of the high-affinity ATP-driven potassium transport (or Kdp) system, which catalyzes the hydrolysis of ATP coupled with the electrogenic transport of potassium into the cytoplasm. This subunit is responsible for energy coupling to the transport system and for the release of the potassium ions to the cytoplasm. The chain is Potassium-transporting ATPase ATP-binding subunit from Escherichia coli O81 (strain ED1a).